The primary structure comprises 250 residues: Nuclear transcription factor Y subunit C-4 (250 aa).

Positions 1–10 (MDNNNNNNNQ) are enriched in low complexity. Disordered stretches follow at residues 1–35 (MDNNNNNNNQQPPPTSVYPPGSAVTTVIPPPPSGS) and 209–250 (GVYA…DSQG). Residues 214–225 (PPSQAWQSVWQN) are compositionally biased toward polar residues. Residues 227 to 242 (AGGGDDVSYGSGGSSG) show a composition bias toward gly residues.

It belongs to the NFYC/HAP5 subunit family. In terms of assembly, heterotrimeric transcription factor composed of three components, NF-YA, NF-YB and NF-YC. NF-YB and NF-YC must interact and dimerize for NF-YA association and DNA binding. Ubiquitous. Present in etiolated seedlings.

The protein resides in the nucleus. In terms of biological role, stimulates the transcription of various genes by recognizing and binding to a CCAAT motif in promoters. Involved in the abscisic acid (ABA) signaling pathway. The protein is Nuclear transcription factor Y subunit C-4 (NFYC4) of Arabidopsis thaliana (Mouse-ear cress).